We begin with the raw amino-acid sequence, 332 residues long: Delta-aminolevulinic acid dehydratase (332 aa).

The active-site Schiff-base intermediate with substrate is lysine 202. 5-aminolevulinate contacts are provided by arginine 212 and lysine 225. Residue lysine 256 is the Schiff-base intermediate with substrate of the active site. 5-aminolevulinate contacts are provided by serine 282 and tyrosine 321.

It belongs to the ALAD family. As to quaternary structure, homohexamer.

The catalysed reaction is 2 5-aminolevulinate = porphobilinogen + 2 H2O + H(+). It participates in porphyrin-containing compound metabolism; protoporphyrin-IX biosynthesis; coproporphyrinogen-III from 5-aminolevulinate: step 1/4. In terms of biological role, catalyzes an early step in the biosynthesis of tetrapyrroles. Binds two molecules of 5-aminolevulinate per subunit, each at a distinct site, and catalyzes their condensation to form porphobilinogen. The protein is Delta-aminolevulinic acid dehydratase (hemB) of Rhodobacter capsulatus (Rhodopseudomonas capsulata).